The sequence spans 162 residues: Caveolin-2 (162 aa).

Residues 1-86 (MGLETEKADV…FEISKYVMYK (86 aa)) lie on the Cytoplasmic side of the membrane. Position 19 is a phosphotyrosine; by SRC (tyrosine 19). Phosphoserine occurs at positions 20 and 23. Phosphotyrosine; by SRC is present on tyrosine 27. Phosphoserine is present on serine 36. The helical intramembrane region spans 87–107 (FLTVFLAIPLAFIAGILFATL). At 108–162 (SCLHIWILMPFVKTCLMVLPSVQTIWKSVTDVIIAPLCTSVGRSFSSVSLQLSQD) the chain is on the cytoplasmic side.

The protein belongs to the caveolin family. Monomer or homodimer. Interacts with CAV1; the interaction forms a stable heterooligomeric complex that is required for targeting to lipid rafts and for caveolae formation. Tyrosine phosphorylated forms do not form heterooligomers with the Tyr-19-phosphorylated form existing as a monomer or dimer, and the Tyr-27-form as a monomer only. Interacts (tyrosine phosphorylated form) with the SH2 domain-containing proteins, RASA1, NCK1 and SRC. Interacts (tyrosine phosphorylated form) with INSR, the interaction (Tyr-27-phosphorylated form) is increased on insulin stimulation. Interacts (Tyr-19 phosphorylated form) with MAPK1 (phosphorylated form); the interaction, promoted by insulin, leads to nuclear location and MAPK1 activation. Interacts with STAT3; the interaction is increased on insulin-induced tyrosine phosphorylation leading to STAT activation. In terms of processing, phosphorylated on serine and tyrosine residues. CAV1 promotes phosphorylation on Ser-23 which then targets the complex to the plasma membrane, lipid rafts and caveolae. Phosphorylation on Ser-36 appears to modulate mitosis in endothelial cells. Phosphorylation on both Tyr-19 and Tyr-27 is required for insulin-induced 'Ser-727' phosphorylation of STAT3 and its activation. Phosphorylation on Tyr-19 is required for insulin-induced phosphorylation of MAPK1 and DNA binding of STAT3. Tyrosine phosphorylation is induced by both EGF and insulin (By. similarity).

It localises to the nucleus. It is found in the cytoplasm. Its subcellular location is the golgi apparatus membrane. The protein localises to the cell membrane. The protein resides in the membrane. It localises to the caveola. Functionally, may act as a scaffolding protein within caveolar membranes. Interacts directly with G-protein alpha subunits and can functionally regulate their activity. Acts as an accessory protein in conjunction with CAV1 in targeting to lipid rafts and driving caveolae formation. The Ser-36 phosphorylated form has a role in modulating mitosis in endothelial cells. Positive regulator of cellular mitogenesis of the MAPK signaling pathway. Required for the insulin-stimulated nuclear translocation and activation of MAPK1 and STAT3, and the subsequent regulation of cell cycle progression. This is Caveolin-2 (CAV2) from Pongo abelii (Sumatran orangutan).